A 145-amino-acid polypeptide reads, in one-letter code: Probable flagellum biosynthesis repressor protein FlbT (145 aa).

Belongs to the FlbT family.

Its function is as follows. Has a post-transcriptional repressor function in flagellum biogenesis. Associates with the 5'-UTR of fljK mRNA and promotes its degradation. The polypeptide is Probable flagellum biosynthesis repressor protein FlbT (Chelativorans sp. (strain BNC1)).